Here is a 159-residue protein sequence, read N- to C-terminus: uncharacterized protein (159 aa).

The 139-residue stretch at 1 to 139 folds into the N-acetyltransferase domain; the sequence is MNIIPTCQVP…TARKMKPEIP (139 aa).

This is an uncharacterized protein from Bacillus subtilis (strain 168).